A 178-amino-acid polypeptide reads, in one-letter code: Fatty-acid and retinol-binding protein 1 (178 aa).

The N-terminal stretch at methionine 1 to alanine 16 is a signal peptide. Coiled-coil stretches lie at residues aspartate 67–asparagine 89 and lysine 130–valine 153.

It belongs to the fatty-acid and retinol-binding protein (FARBP) family. In terms of processing, not glycosylated.

Its subcellular location is the secreted. Its function is as follows. Binds retinol. Also binds the fluorescent fatty acid 11-((5-dimethylaminonaphthalene-1-sulfonyl)amino)undecanoic acid (DAUDA). The long chain fatty acid oleic acid can act competitively to displace bound DAUDA and retinol. This chain is Fatty-acid and retinol-binding protein 1, found in Brugia malayi (Filarial nematode worm).